The sequence spans 463 residues: Trigger factor (463 aa).

The 82-residue stretch at 162–243 folds into the PPIase FKBP-type domain; that stretch reads GDHVSIDLSA…VHSVKLKELP (82 aa). Polar residues predominate over residues 427–444; the sequence is SGNTIEPPTPVHTETITV. The tract at residues 427-463 is disordered; that stretch reads SGNTIEPPTPVHTETITVASGDEETEESAAEQGETEK.

Belongs to the FKBP-type PPIase family. Tig subfamily.

It localises to the cytoplasm. It carries out the reaction [protein]-peptidylproline (omega=180) = [protein]-peptidylproline (omega=0). Involved in protein export. Acts as a chaperone by maintaining the newly synthesized protein in an open conformation. Functions as a peptidyl-prolyl cis-trans isomerase. The chain is Trigger factor from Thermobifida fusca (strain YX).